A 310-amino-acid polypeptide reads, in one-letter code: Putative HTH-type transcriptional regulatory protein M1425_1284 (310 aa).

Residues 125-180 (LKHKREEMGYSIGDVAKFLGVSRKAIYDYEKGDSDVSLEVAEKLIDLFGDDIIGDV) form the HTH cro/C1-type domain. Residues 136–155 (IGDVAKFLGVSRKAIYDYEK) constitute a DNA-binding region (H-T-H motif).

The sequence is that of Putative HTH-type transcriptional regulatory protein M1425_1284 from Saccharolobus islandicus (strain M.14.25 / Kamchatka #1) (Sulfolobus islandicus).